A 518-amino-acid polypeptide reads, in one-letter code: Glucose-1-phosphate adenylyltransferase large subunit 2, cytosolic (518 aa).

Belongs to the bacterial/plant glucose-1-phosphate adenylyltransferase family. In terms of assembly, heterotetramer composed of two small and two large subunits.

It is found in the cytoplasm. The protein localises to the cytosol. The catalysed reaction is alpha-D-glucose 1-phosphate + ATP + H(+) = ADP-alpha-D-glucose + diphosphate. Its pathway is glycan biosynthesis; starch biosynthesis. Activated by 3'phosphoglycerate, inhibited by orthophosphate. Allosteric regulation. Inhibited by inorganic phosphate (Pi). Its function is as follows. Involved in synthesis of starch. Catalyzes the synthesis of ADP-glucose, a molecule that serves as an activated glycosyl donor for alpha-1,4-glucan synthesis. Essential for starch synthesis in seed endosperm. Is essential for both catalytic and allosteric regulatory properties of the cytosolic heterotetramer enzyme. This Oryza sativa subsp. japonica (Rice) protein is Glucose-1-phosphate adenylyltransferase large subunit 2, cytosolic.